The chain runs to 402 residues: S-adenosylmethionine synthase (402 aa).

His-16 serves as a coordination point for ATP. Asp-18 serves as a coordination point for Mg(2+). Glu-44 serves as a coordination point for K(+). L-methionine contacts are provided by Glu-57 and Gln-103. A flexible loop region spans residues 103 to 113; that stretch reads QSPDIAQGVDT. ATP is bound by residues 178–180, 249–250, Asp-258, 264–265, Ala-281, and Lys-285; these read DGK, KF, and RK. Asp-258 serves as a coordination point for L-methionine. Residue Lys-289 participates in L-methionine binding.

Belongs to the AdoMet synthase family. Homotetramer; dimer of dimers. Mg(2+) is required as a cofactor. K(+) serves as cofactor.

It is found in the cytoplasm. It carries out the reaction L-methionine + ATP + H2O = S-adenosyl-L-methionine + phosphate + diphosphate. Its pathway is amino-acid biosynthesis; S-adenosyl-L-methionine biosynthesis; S-adenosyl-L-methionine from L-methionine: step 1/1. In terms of biological role, catalyzes the formation of S-adenosylmethionine (AdoMet) from methionine and ATP. The overall synthetic reaction is composed of two sequential steps, AdoMet formation and the subsequent tripolyphosphate hydrolysis which occurs prior to release of AdoMet from the enzyme. The protein is S-adenosylmethionine synthase of Mycolicibacterium gilvum (strain PYR-GCK) (Mycobacterium gilvum (strain PYR-GCK)).